We begin with the raw amino-acid sequence, 754 residues long: 5-methyltetrahydropteroyltriglutamate--homocysteine methyltransferase (754 aa).

5-methyltetrahydropteroyltri-L-glutamate-binding positions include 15–18 (RELK) and lysine 114. L-homocysteine contacts are provided by residues 430-432 (IGS) and glutamate 483. L-methionine is bound by residues 430–432 (IGS) and glutamate 483. 5-methyltetrahydropteroyltri-L-glutamate-binding positions include 514–515 (RC) and tryptophan 560. An L-homocysteine-binding site is contributed by aspartate 598. Residue aspartate 598 participates in L-methionine binding. Residue glutamate 604 participates in 5-methyltetrahydropteroyltri-L-glutamate binding. Residues histidine 641, cysteine 643, and glutamate 665 each contribute to the Zn(2+) site. Histidine 694 (proton donor) is an active-site residue. Cysteine 726 is a Zn(2+) binding site.

Belongs to the vitamin-B12 independent methionine synthase family. Zn(2+) serves as cofactor.

The catalysed reaction is 5-methyltetrahydropteroyltri-L-glutamate + L-homocysteine = tetrahydropteroyltri-L-glutamate + L-methionine. Its pathway is amino-acid biosynthesis; L-methionine biosynthesis via de novo pathway; L-methionine from L-homocysteine (MetE route): step 1/1. Catalyzes the transfer of a methyl group from 5-methyltetrahydrofolate to homocysteine resulting in methionine formation. The polypeptide is 5-methyltetrahydropteroyltriglutamate--homocysteine methyltransferase (Campylobacter jejuni subsp. jejuni serotype O:23/36 (strain 81-176)).